A 343-amino-acid chain; its full sequence is CCN family member 3 (343 aa).

An N-terminal signal peptide occupies residues 1–18 (MTPHLALCFILLIQQVAS). The 72-residue stretch at 19 to 90 (QKCPSQCDQC…RMETGTCMAL (72 aa)) folds into the IGFBP N-terminal domain. Intrachain disulfides connect cysteine 21-cysteine 46, cysteine 25-cysteine 48, cysteine 28-cysteine 49, cysteine 35-cysteine 52, cysteine 60-cysteine 74, and cysteine 66-cysteine 87. Residues 93–159 (NSCVFDGVVY…GECCEKWVCD (67 aa)) enclose the VWFC domain. In terms of domain architecture, TSP type-1 spans 190–235 (ACIAQTTEWSACSKTCGMGVSSRVTNRNARCEMQKQIRLCMVRSCE). Cystine bridges form between cysteine 249–cysteine 286, cysteine 266–cysteine 300, cysteine 277–cysteine 316, cysteine 280–cysteine 318, and cysteine 285–cysteine 322. One can recognise a CTCK domain in the interval 249-323 (CVRVRKTTKP…STCVCHYNCP (75 aa)). Residue asparagine 265 is glycosylated (N-linked (GlcNAc...) asparagine).

The protein belongs to the CCN family.

The protein resides in the secreted. It localises to the cytoplasm. The protein localises to the cell junction. Its subcellular location is the gap junction. Functionally, immediate-early protein playing a role in various cellular processes including proliferation, adhesion, migration, differentiation and survival. Acts by binding to integrins or membrane receptors such as NOTCH1. The polypeptide is CCN family member 3 (ccn3) (Xenopus laevis (African clawed frog)).